The sequence spans 138 residues: MTQMTVQVVTPDGIKYDHHAKCISVTTPDGEMGILPNHINLIAPLQVHEMKIRRGGEDEKVDWIAINGGIIEIKDNVVTVVADSAERDRDIDVSRAERAKLRAEREIAQAETTHNIDEVRRAKVALRRALNRINVSKK.

The protein belongs to the ATPase epsilon chain family. F-type ATPases have 2 components, CF(1) - the catalytic core - and CF(0) - the membrane proton channel. CF(1) has five subunits: alpha(3), beta(3), gamma(1), delta(1), epsilon(1). CF(0) has three main subunits: a, b and c.

The protein resides in the cell membrane. In terms of biological role, produces ATP from ADP in the presence of a proton gradient across the membrane. The chain is ATP synthase epsilon chain from Streptococcus pyogenes serotype M3 (strain ATCC BAA-595 / MGAS315).